The chain runs to 199 residues: NAD(P)H-quinone oxidoreductase chain 6 (199 aa).

The next 5 membrane-spanning stretches (helical) occupy residues 9 to 29 (IVSFAILAAMMIGSAIGVVLL), 32 to 52 (VVYSAFLLGGVFISIAGLYLL), 61 to 81 (AQVLIYVGAVNVLILFAIMLV), 102 to 122 (LVCAGIFALLSAMVLTTPWAI), and 143 to 163 (FLLPFELASILLLMALVGAIV).

The protein belongs to the complex I subunit 6 family.

The protein localises to the membrane. It catalyses the reaction a plastoquinone + NADH + (n+1) H(+)(in) = a plastoquinol + NAD(+) + n H(+)(out). The catalysed reaction is a plastoquinone + NADPH + (n+1) H(+)(in) = a plastoquinol + NADP(+) + n H(+)(out). Functionally, NDH-1 shuttles electrons from NAD(P)H, via FMN and iron-sulfur (Fe-S) centers, to quinones in the respiratory chain. The immediate electron acceptor for the enzyme in this species is believed to be plastoquinone. Couples the redox reaction to proton translocation (for every two electrons transferred, four hydrogen ions are translocated across the cytoplasmic membrane), and thus conserves the redox energy in a proton gradient. This chain is NAD(P)H-quinone oxidoreductase chain 6 (ndhG), found in Leptolyngbya boryana (Plectonema boryanum).